The following is a 385-amino-acid chain: Polyketide synthase 2 (385 aa).

The active site involves cysteine 157.

This sequence belongs to the thiolase-like superfamily. Chalcone/stilbene synthases family. Expressed in leaves and glandular trichomes.

Its subcellular location is the cytoplasm. Its function is as follows. Polyketide synthase responsible for the biosynthesis of secondary metabolites. This chain is Polyketide synthase 2 (PKSG2), found in Cannabis sativa (Hemp).